Here is a 357-residue protein sequence, read N- to C-terminus: Membrane-bound lytic murein transglycosylase C (357 aa).

An N-terminal signal peptide occupies residues 1–16 (MKKILPLVIIAPLLIS). Cysteine 17 carries the N-palmitoyl cysteine lipid modification. Residue cysteine 17 is the site of S-diacylglycerol cysteine attachment.

The protein belongs to the transglycosylase Slt family.

It localises to the cell outer membrane. It carries out the reaction Exolytic cleavage of the (1-&gt;4)-beta-glycosidic linkage between N-acetylmuramic acid (MurNAc) and N-acetylglucosamine (GlcNAc) residues in peptidoglycan, from either the reducing or the non-reducing ends of the peptidoglycan chains, with concomitant formation of a 1,6-anhydrobond in the MurNAc residue.. Functionally, murein-degrading enzyme. May play a role in recycling of muropeptides during cell elongation and/or cell division. The protein is Membrane-bound lytic murein transglycosylase C of Sodalis glossinidius (strain morsitans).